Reading from the N-terminus, the 427-residue chain is Tryptophan synthase beta chain (427 aa).

K100 carries the post-translational modification N6-(pyridoxal phosphate)lysine.

Belongs to the TrpB family. As to quaternary structure, tetramer of two alpha and two beta chains. The cofactor is pyridoxal 5'-phosphate.

The catalysed reaction is (1S,2R)-1-C-(indol-3-yl)glycerol 3-phosphate + L-serine = D-glyceraldehyde 3-phosphate + L-tryptophan + H2O. The protein operates within amino-acid biosynthesis; L-tryptophan biosynthesis; L-tryptophan from chorismate: step 5/5. In terms of biological role, the beta subunit is responsible for the synthesis of L-tryptophan from indole and L-serine. The protein is Tryptophan synthase beta chain (trpB) of Streptomyces coelicolor (strain ATCC BAA-471 / A3(2) / M145).